Here is a 492-residue protein sequence, read N- to C-terminus: MKYKDLRDFIAMLEQQGKLKRIAHPVSPHLEMTEIADRVLRAEGPALLFEHPVKPDGTRYDYPVLANLFGTPERVAMGMGADSVSKLREIGQTLAYLKEPEPPKGIKDAFSKLPLLKDIWSMAPNVVKNAPCQEIVWEGEDVDLYQLPIQHCWPEDVAPLVTWGLTVTRGPHKKRQNLGIYRQQLIGINKLIMRWLSHRGGALDYQEFRKLNPDTPYPVAVVLGCDPATILGAVTPVPDTLSEYQFAGLLRGSRTELVKCIGNDLQVPARAEIVLEGVIHPNETALEGPYGDHTGYYNEQDHFPVFTVERITMRENPIYHSTYTGKPPDEPAVLGVALNEVFVPLLQKQFPEITDFYLPPEGCSYRMAVVSMKKQYAGHAKRVMMGCWSFLRQFMYTKFIIVVDDDVDVRDWKEVIWAVTTRMDPVRDTVLMENTPIDYLDFASPVSGLGGKMGLDATNKWPGETDREWGRVIKKDPAVTAKIDEIWEELGL.

N177 is a Mn(2+) binding site. Prenylated FMN-binding positions include 180 to 182, 194 to 196, and 199 to 200; these read IYR, RWL, and RG. E243 contacts Mn(2+). D292 (proton donor) is an active-site residue.

This sequence belongs to the UbiD family. As to quaternary structure, homohexamer. Prenylated FMN is required as a cofactor. The cofactor is Mn(2+).

The protein resides in the cell membrane. The enzyme catalyses a 4-hydroxy-3-(all-trans-polyprenyl)benzoate + H(+) = a 2-(all-trans-polyprenyl)phenol + CO2. It functions in the pathway cofactor biosynthesis; ubiquinone biosynthesis. Catalyzes the decarboxylation of 3-octaprenyl-4-hydroxy benzoate to 2-octaprenylphenol, an intermediate step in ubiquinone biosynthesis. This Neisseria meningitidis serogroup A / serotype 4A (strain DSM 15465 / Z2491) protein is 3-octaprenyl-4-hydroxybenzoate carboxy-lyase.